Consider the following 258-residue polypeptide: Shikimate dehydrogenase (NADP(+)) (258 aa).

Shikimate is bound by residues 14 to 16 (SES) and Thr-61. Lys-65 functions as the Proton acceptor in the catalytic mechanism. Shikimate-binding residues include Asn-86 and Asp-101. Residues 125 to 129 (GSGGS) and Leu-211 contribute to the NADP(+) site. Tyr-213 contacts shikimate. Gly-234 provides a ligand contact to NADP(+).

Belongs to the shikimate dehydrogenase family. Homodimer.

It catalyses the reaction shikimate + NADP(+) = 3-dehydroshikimate + NADPH + H(+). It functions in the pathway metabolic intermediate biosynthesis; chorismate biosynthesis; chorismate from D-erythrose 4-phosphate and phosphoenolpyruvate: step 4/7. Involved in the biosynthesis of the chorismate, which leads to the biosynthesis of aromatic amino acids. Catalyzes the reversible NADPH linked reduction of 3-dehydroshikimate (DHSA) to yield shikimate (SA). The chain is Shikimate dehydrogenase (NADP(+)) from Clostridium botulinum (strain ATCC 19397 / Type A).